Reading from the N-terminus, the 259-residue chain is 3-deoxy-manno-octulosonate cytidylyltransferase (259 aa).

The protein belongs to the KdsB family.

The protein resides in the cytoplasm. The catalysed reaction is 3-deoxy-alpha-D-manno-oct-2-ulosonate + CTP = CMP-3-deoxy-beta-D-manno-octulosonate + diphosphate. It participates in nucleotide-sugar biosynthesis; CMP-3-deoxy-D-manno-octulosonate biosynthesis; CMP-3-deoxy-D-manno-octulosonate from 3-deoxy-D-manno-octulosonate and CTP: step 1/1. Its pathway is bacterial outer membrane biogenesis; lipopolysaccharide biosynthesis. Its function is as follows. Activates KDO (a required 8-carbon sugar) for incorporation into bacterial lipopolysaccharide in Gram-negative bacteria. The chain is 3-deoxy-manno-octulosonate cytidylyltransferase from Actinobacillus succinogenes (strain ATCC 55618 / DSM 22257 / CCUG 43843 / 130Z).